A 247-amino-acid polypeptide reads, in one-letter code: Adenosylcobinamide-GDP ribazoletransferase (247 aa).

6 helical membrane passes run 34–54, 59–79, 113–133, 138–158, 171–193, and 194–214; these read IVTF…VFVA, CGIP…TGGF, GGLA…ELAL, MLAA…LLMY, VFIG…ILAA, and ILMP…AIFI.

This sequence belongs to the CobS family. The cofactor is Mg(2+).

The protein localises to the cell inner membrane. It carries out the reaction alpha-ribazole + adenosylcob(III)inamide-GDP = adenosylcob(III)alamin + GMP + H(+). The catalysed reaction is alpha-ribazole 5'-phosphate + adenosylcob(III)inamide-GDP = adenosylcob(III)alamin 5'-phosphate + GMP + H(+). The protein operates within cofactor biosynthesis; adenosylcobalamin biosynthesis; adenosylcobalamin from cob(II)yrinate a,c-diamide: step 7/7. Functionally, joins adenosylcobinamide-GDP and alpha-ribazole to generate adenosylcobalamin (Ado-cobalamin). Also synthesizes adenosylcobalamin 5'-phosphate from adenosylcobinamide-GDP and alpha-ribazole 5'-phosphate. The chain is Adenosylcobinamide-GDP ribazoletransferase from Citrobacter koseri (strain ATCC BAA-895 / CDC 4225-83 / SGSC4696).